The sequence spans 1405 residues: MKDLLNLFNQQRQTLDFDAIKIALASPDLIRSWSYGEVKKPETINYRTFKPERDGLFCAAIFGPIKDYECLCGKYKRMKHRGVVCEKCGTEVTLAKVRRERMGHIDLASPVAHIWFLKSLPSRIGLMLDMTLRDIERVLYFEAYVVTEPGLTPLERRQLLTEEQYLTARQEYNDDFDAAMGAEAVYELLRTIDLQSEMTRLREEIASTGSETKLKRLTKRIKLIEAFLESGNRPEWMVMTVLPVLPPDLRPLVPLDGGRFATSDLNDLYRRVINRNNRLRRLLELNAPDIIVRNEKRMLQESVDALLDNGRRGRAITGTNKRPLKSLADMIKGKQGRFRQNLLGKRVDYSGRSVITVGPYLKLHQCGLPKKMALELFKPFVFAKLQRRGLATTIKAAKKLVEREEAEVWDILEEVIREHPVLLNRAPTLHRLGIQAFEPVLIEGKAIQLHPLVCTAFNADFDGDQMAVHVPLSLEAQLEARALMMSTNNILSPANGEPIIVPSQDVVLGLYYMSRALENKKGEGMVFANTSEVKRAYDNRVVELHAKVKVRITQVDVDTVDGKRTSGTSIVDTTVGRALLSEILPEGLPFQLANTEMTKKNISRLINSSYRLLGLKDTVVFADKLMYTGYAYATRAGVSIGIDDMLIPDEKKGILTEAEAEVLEIQEQYQSGLVTAGERYNKVVDIWSRTSGRIAKAMMDTIGTEKVENAKGETIDQKSMNSLYIMADSGARGSQAQIRQLAGMRGLMARPDGSIIETPIKANFREGLNVQEYFNSTHGARKGLADTALKTANSGYLTRRLVDVAQDVVITEVDCGTTEGLIMTPIVEGGDVVEPLKERVLGRVVAEDVYLPGNDEEPIVTRNTLLDEAWVAKLEDASVQSVKVRSTISCESSFGVCARCYGRDLARGHQVNIGEAVGVIAAQSIGEPGTQLTMRTFHIGGAASRAAAVDNITVKTTGSVKFNNLKSVAHASGALVAVSRSGELSVLDGHGRERERYKLPYGATITAKDGDAVKAGQAVANWDPHNHPIVSEVAGFIRFIDFVDGVTVIEKTDELTGLASREITDPKRRGAQAKELRPIVRIVDAKGNDLTIPNTDLPAQYLLPPRSIVNLQDGAAVGVGDVVAKIPQEASKTRDITGGLPRVADLFEARKPKDPAILAERSGIISFGKDTKGKQRLIIKDTDGSEHEELIPKYRQIIVFEGEHVTKGETVVDGEPSPQDILRLLGVEPLAAYLVKEIQDVYRLQGVKINDKHIEVITRQMLRKVEITDQGNSKFLNGEQVERQRVIEENARLVTRNELPAKYDPVLLGITKASLATESFISAASFQETTRVLTEAAVRGTRDNLRGLKENVIVGRLIPAGTGLAYHAGRRKASGLTDSEMETLSGKPAVAEPVATVADAGADEE.

Zn(2+) is bound by residues C70, C72, C85, and C88. Residues D460, D462, and D464 each contribute to the Mg(2+) site. 4 residues coordinate Zn(2+): C815, C890, C897, and C900.

This sequence belongs to the RNA polymerase beta' chain family. As to quaternary structure, the RNAP catalytic core consists of 2 alpha, 1 beta, 1 beta' and 1 omega subunit. When a sigma factor is associated with the core the holoenzyme is formed, which can initiate transcription. It depends on Mg(2+) as a cofactor. The cofactor is Zn(2+).

It carries out the reaction RNA(n) + a ribonucleoside 5'-triphosphate = RNA(n+1) + diphosphate. In terms of biological role, DNA-dependent RNA polymerase catalyzes the transcription of DNA into RNA using the four ribonucleoside triphosphates as substrates. The sequence is that of DNA-directed RNA polymerase subunit beta' from Xanthomonas campestris pv. campestris (strain B100).